Reading from the N-terminus, the 194-residue chain is MNFAALILAGGSSRRMGQDKALLRLNGEPLLIRTSRIAAAVCDSVWICSPEPDRYQSLLSQPVQWLTEPQPTGPQGPLTALAWALPQIDADWILLLACDLPRLAIAPLQAWRQQVELLPEDCRAAIARTEQGWEPLIGFYRPAIAPTIAPWLSQGRRDFQGWLATVAVQELPLSDRDWLVNCNTPTDWQALQLS.

Residues 8 to 10 (LAG), K20, and D99 contribute to the GTP site. D99 contributes to the Mg(2+) binding site.

This sequence belongs to the MobA family. The cofactor is Mg(2+).

The protein localises to the cytoplasm. It catalyses the reaction Mo-molybdopterin + GTP + H(+) = Mo-molybdopterin guanine dinucleotide + diphosphate. In terms of biological role, transfers a GMP moiety from GTP to Mo-molybdopterin (Mo-MPT) cofactor (Moco or molybdenum cofactor) to form Mo-molybdopterin guanine dinucleotide (Mo-MGD) cofactor. In Synechococcus elongatus (strain ATCC 33912 / PCC 7942 / FACHB-805) (Anacystis nidulans R2), this protein is Probable molybdenum cofactor guanylyltransferase.